The following is a 148-amino-acid chain: Endoribonuclease YbeY (148 aa).

Zn(2+) contacts are provided by His-105, His-109, and Asp-115.

Belongs to the endoribonuclease YbeY family. Zn(2+) is required as a cofactor.

It localises to the cytoplasm. Its function is as follows. Single strand-specific metallo-endoribonuclease involved in late-stage 70S ribosome quality control and in maturation of the 3' terminus of the 16S rRNA. The chain is Endoribonuclease YbeY from Chlorobium phaeovibrioides (strain DSM 265 / 1930) (Prosthecochloris vibrioformis (strain DSM 265)).